A 507-amino-acid chain; its full sequence is RNA-splicing ligase RtcB homolog (507 aa).

Mn(2+)-binding residues include Asp121, Cys124, His229, His261, and His355. 228 to 232 (NHYAE) serves as a coordination point for GMP. GMP contacts are provided by residues 355-356 (HN), 404-407 (GGTM), Ser411, 430-433 (HGAG), and Lys506. The active-site GMP-histidine intermediate is the His430.

It belongs to the RtcB family. In terms of assembly, catalytic component of the tRNA-splicing ligase complex. Mn(2+) is required as a cofactor.

The enzyme catalyses a 3'-end 3'-phospho-ribonucleotide-RNA + a 5'-end dephospho-ribonucleoside-RNA + GTP = a ribonucleotidyl-ribonucleotide-RNA + GMP + diphosphate. The catalysed reaction is a 3'-end 2',3'-cyclophospho-ribonucleotide-RNA + a 5'-end dephospho-ribonucleoside-RNA + GTP + H2O = a ribonucleotidyl-ribonucleotide-RNA + GMP + diphosphate + H(+). Its function is as follows. Catalytic subunit of the tRNA-splicing ligase complex that acts by directly joining spliced tRNA halves to mature-sized tRNAs by incorporating the precursor-derived splice junction phosphate into the mature tRNA as a canonical 3',5'-phosphodiester. May act as an RNA ligase with broad substrate specificity, and may function toward other RNAs. The sequence is that of RNA-splicing ligase RtcB homolog from Branchiostoma floridae (Florida lancelet).